The primary structure comprises 360 residues: Isocitrate dehydrogenase [NAD] subunit 1, mitochondrial (360 aa).

The transit peptide at 1–11 directs the protein to the mitochondrion; it reads MLNRTIAKRTL. Substrate is bound by residues Arg109, Arg140, and Asp228. Asp228 provides a ligand contact to Mg(2+).

It belongs to the isocitrate and isopropylmalate dehydrogenases family. As to quaternary structure, octamer of two non-identical subunits IDH1 and IDH2. Requires Mg(2+) as cofactor. Mn(2+) serves as cofactor.

It localises to the mitochondrion. The enzyme catalyses D-threo-isocitrate + NAD(+) = 2-oxoglutarate + CO2 + NADH. With respect to regulation, allosterically regulated by several compounds including AMP, NAD(+), and citrate. Functionally, performs an essential role in the oxidative function of the citric acid cycle. Also binds RNA; specifically to the 5'-untranslated leaders of mitochondrial mRNAs. In Saccharomyces cerevisiae (strain ATCC 204508 / S288c) (Baker's yeast), this protein is Isocitrate dehydrogenase [NAD] subunit 1, mitochondrial (IDH1).